Reading from the N-terminus, the 219-residue chain is Glutathione S-transferase-like protein LUC7 (219 aa).

Positions Pro3–Glu84 constitute a GST N-terminal domain. A GST C-terminal domain is found at Asp90–Glu219.

It belongs to the GST superfamily.

In terms of biological role, glutathione S-transferase-like protein; part of the gene cluster that mediates the biosynthesis of the mycotoxin lucilactaene and the lucilactaene-related compound NG-391 that act as cell cycle inhibitors with potent growth inhibitory activity against malarial parasites, moderate growth inhibitory activity against cancer cells, and no activity against bacteria and fungi. Within the cluster, LUC7 and LUC8 encode proteins which are not commonly involved in the biosynthesis of secondary metabolites and are not essential for lucilactaene biosynthesis. In Fusarium sp, this protein is Glutathione S-transferase-like protein LUC7.